We begin with the raw amino-acid sequence, 439 residues long: Tol-Pal system protein TolB (439 aa).

The signal sequence occupies residues 1 to 22 (MTKFPRWLAMLVGLLFPLSALT).

Belongs to the TolB family. As to quaternary structure, the Tol-Pal system is composed of five core proteins: the inner membrane proteins TolA, TolQ and TolR, the periplasmic protein TolB and the outer membrane protein Pal. They form a network linking the inner and outer membranes and the peptidoglycan layer.

It localises to the periplasm. Part of the Tol-Pal system, which plays a role in outer membrane invagination during cell division and is important for maintaining outer membrane integrity. The chain is Tol-Pal system protein TolB from Xylella fastidiosa (strain Temecula1 / ATCC 700964).